We begin with the raw amino-acid sequence, 558 residues long: Dihydroxy-acid dehydratase (558 aa).

Aspartate 78 is a binding site for Mg(2+). Cysteine 119 contributes to the [2Fe-2S] cluster binding site. Mg(2+) contacts are provided by aspartate 120 and lysine 121. Lysine 121 is subject to N6-carboxylysine. [2Fe-2S] cluster is bound at residue cysteine 192. Glutamate 445 lines the Mg(2+) pocket. The active-site Proton acceptor is serine 471.

It belongs to the IlvD/Edd family. In terms of assembly, homodimer. The cofactor is [2Fe-2S] cluster. Mg(2+) serves as cofactor.

It carries out the reaction (2R)-2,3-dihydroxy-3-methylbutanoate = 3-methyl-2-oxobutanoate + H2O. The enzyme catalyses (2R,3R)-2,3-dihydroxy-3-methylpentanoate = (S)-3-methyl-2-oxopentanoate + H2O. The protein operates within amino-acid biosynthesis; L-isoleucine biosynthesis; L-isoleucine from 2-oxobutanoate: step 3/4. It participates in amino-acid biosynthesis; L-valine biosynthesis; L-valine from pyruvate: step 3/4. Functionally, functions in the biosynthesis of branched-chain amino acids. Catalyzes the dehydration of (2R,3R)-2,3-dihydroxy-3-methylpentanoate (2,3-dihydroxy-3-methylvalerate) into 2-oxo-3-methylpentanoate (2-oxo-3-methylvalerate) and of (2R)-2,3-dihydroxy-3-methylbutanoate (2,3-dihydroxyisovalerate) into 2-oxo-3-methylbutanoate (2-oxoisovalerate), the penultimate precursor to L-isoleucine and L-valine, respectively. This Akkermansia muciniphila (strain ATCC BAA-835 / DSM 22959 / JCM 33894 / BCRC 81048 / CCUG 64013 / CIP 107961 / Muc) protein is Dihydroxy-acid dehydratase.